The primary structure comprises 234 residues: MNPDLNMNPHDSGRTDPYAPELGEIATDEGDGENVTKTGTTTVGLATEEGVVIATDRRASLGGRFVSNKNVVKVEEIHPTAAMTLVGSVGGAQSFIRTLRSEASLYETRRDEPMSINALATLAGNFARGGPFLAIHPILGGVDDEGSHVYTIDPAGGVMEDDYAVTGSGMQVAYGTIEGEYESDLSTEEAKELATNAVQAASERDTGSGNGLVIAEITDEGVEIEEFDDLADAL.

The disordered stretch occupies residues 1 to 35; it reads MNPDLNMNPHDSGRTDPYAPELGEIATDEGDGENV. A propeptide spans 1-39 (removed in mature form; by autocatalysis); it reads MNPDLNMNPHDSGRTDPYAPELGEIATDEGDGENVTKTG. Threonine 40 serves as the catalytic Nucleophile.

Belongs to the peptidase T1B family. As to quaternary structure, the 20S proteasome core is composed of 14 alpha and 14 beta subunits that assemble into four stacked heptameric rings, resulting in a barrel-shaped structure. The two inner rings, each composed of seven catalytic beta subunits, are sandwiched by two outer rings, each composed of seven alpha subunits. The catalytic chamber with the active sites is on the inside of the barrel. Has a gated structure, the ends of the cylinder being occluded by the N-termini of the alpha-subunits. Is capped at one or both ends by the proteasome regulatory ATPase, PAN.

The protein localises to the cytoplasm. It catalyses the reaction Cleavage of peptide bonds with very broad specificity.. With respect to regulation, the formation of the proteasomal ATPase PAN-20S proteasome complex, via the docking of the C-termini of PAN into the intersubunit pockets in the alpha-rings, triggers opening of the gate for substrate entry. Interconversion between the open-gate and close-gate conformations leads to a dynamic regulation of the 20S proteasome proteolysis activity. Functionally, component of the proteasome core, a large protease complex with broad specificity involved in protein degradation. The polypeptide is Proteasome subunit beta (Halorhabdus utahensis (strain DSM 12940 / JCM 11049 / AX-2)).